A 146-amino-acid polypeptide reads, in one-letter code: 3-dehydroquinate dehydratase (146 aa).

Tyr-23 (proton acceptor) is an active-site residue. Positions 74, 80, and 87 each coordinate substrate. His-100 acts as the Proton donor in catalysis. Residues 101 to 102 (IS) and Arg-111 each bind substrate.

Belongs to the type-II 3-dehydroquinase family. Homododecamer.

It carries out the reaction 3-dehydroquinate = 3-dehydroshikimate + H2O. It participates in metabolic intermediate biosynthesis; chorismate biosynthesis; chorismate from D-erythrose 4-phosphate and phosphoenolpyruvate: step 3/7. Functionally, catalyzes a trans-dehydration via an enolate intermediate. The chain is 3-dehydroquinate dehydratase from Bacillus cereus (strain AH820).